A 486-amino-acid chain; its full sequence is Ribulose bisphosphate carboxylase large chain 1 (486 aa).

Asn125 and Thr175 together coordinate substrate. Lys177 functions as the Proton acceptor in the catalytic mechanism. Residue Lys179 coordinates substrate. Mg(2+)-binding residues include Lys203, Asp205, and Glu206. Residue Lys203 is modified to N6-carboxylysine. The Proton acceptor role is filled by His295. Residues Arg296, His328, and Ser380 each coordinate substrate.

Belongs to the RuBisCO large chain family. Type I subfamily. Heterohexadecamer of 8 large chains and 8 small chains. The cofactor is Mg(2+).

The catalysed reaction is 2 (2R)-3-phosphoglycerate + 2 H(+) = D-ribulose 1,5-bisphosphate + CO2 + H2O. The enzyme catalyses D-ribulose 1,5-bisphosphate + O2 = 2-phosphoglycolate + (2R)-3-phosphoglycerate + 2 H(+). Functionally, ruBisCO catalyzes two reactions: the carboxylation of D-ribulose 1,5-bisphosphate, the primary event in carbon dioxide fixation, as well as the oxidative fragmentation of the pentose substrate. Both reactions occur simultaneously and in competition at the same active site. This Bradyrhizobium sp. (strain ORS 278) protein is Ribulose bisphosphate carboxylase large chain 1.